We begin with the raw amino-acid sequence, 153 residues long: Aspartate carbamoyltransferase regulatory chain (153 aa).

4 residues coordinate Zn(2+): Cys-109, Cys-114, Cys-138, and Cys-141.

Belongs to the PyrI family. Contains catalytic and regulatory chains. Requires Zn(2+) as cofactor.

Its function is as follows. Involved in allosteric regulation of aspartate carbamoyltransferase. This Vibrio parahaemolyticus serotype O3:K6 (strain RIMD 2210633) protein is Aspartate carbamoyltransferase regulatory chain.